Here is a 445-residue protein sequence, read N- to C-terminus: Phosphoglucosamine mutase 1 (445 aa).

The Phosphoserine intermediate role is filled by Ser102. Residues Ser102, Asp241, Asp243, and Asp245 each contribute to the Mg(2+) site. At Ser102 the chain carries Phosphoserine.

The protein belongs to the phosphohexose mutase family. The cofactor is Mg(2+). Activated by phosphorylation.

It carries out the reaction alpha-D-glucosamine 1-phosphate = D-glucosamine 6-phosphate. Catalyzes the conversion of glucosamine-6-phosphate to glucosamine-1-phosphate. The polypeptide is Phosphoglucosamine mutase 1 (Shewanella amazonensis (strain ATCC BAA-1098 / SB2B)).